We begin with the raw amino-acid sequence, 1384 residues long: DNA-directed RNA polymerase subunit beta (1384 aa).

It belongs to the RNA polymerase beta chain family. As to quaternary structure, the RNAP catalytic core consists of 2 alpha, 1 beta, 1 beta' and 1 omega subunit. When a sigma factor is associated with the core the holoenzyme is formed, which can initiate transcription.

It carries out the reaction RNA(n) + a ribonucleoside 5'-triphosphate = RNA(n+1) + diphosphate. Its function is as follows. DNA-dependent RNA polymerase catalyzes the transcription of DNA into RNA using the four ribonucleoside triphosphates as substrates. The polypeptide is DNA-directed RNA polymerase subunit beta (Xylella fastidiosa (strain M12)).